Reading from the N-terminus, the 391-residue chain is Transaldolase (391 aa).

The interval 1–329 (MGKNLLEQLR…RLKVLDGQEH (329 aa)) is transaldolase. The active-site Schiff-base intermediate with substrate is K136. EF-hand domains lie at 329–364 (HIKHGAEEIFHAYDLDGDGFITREEWAGTDVVFDAL) and 365–387 (DRDHDGKITAAEMSAGLGAAFRL). Ca(2+) is bound by residues D342, D344, D346, E353, D365, D367, D369, K371, and E376.

Belongs to the transaldolase family. Type 1 subfamily.

Its subcellular location is the cytoplasm. The enzyme catalyses D-sedoheptulose 7-phosphate + D-glyceraldehyde 3-phosphate = D-erythrose 4-phosphate + beta-D-fructose 6-phosphate. The protein operates within carbohydrate degradation; pentose phosphate pathway; D-glyceraldehyde 3-phosphate and beta-D-fructose 6-phosphate from D-ribose 5-phosphate and D-xylulose 5-phosphate (non-oxidative stage): step 2/3. In terms of biological role, transaldolase is important for the balance of metabolites in the pentose-phosphate pathway. The sequence is that of Transaldolase from Synechocystis sp. (strain ATCC 27184 / PCC 6803 / Kazusa).